The primary structure comprises 329 residues: DNA-directed RNA polymerase subunit alpha (329 aa).

The interval 1 to 235 (MQNSIIGFLK…EQLEAFVDLR (235 aa)) is alpha N-terminal domain (alpha-NTD). The tract at residues 249–329 (FEPILLRPVD…KWPPSSILEE (81 aa)) is alpha C-terminal domain (alpha-CTD).

It belongs to the RNA polymerase alpha chain family. In terms of assembly, homodimer. The RNAP catalytic core consists of 2 alpha, 1 beta, 1 beta' and 1 omega subunit. When a sigma factor is associated with the core the holoenzyme is formed, which can initiate transcription.

The enzyme catalyses RNA(n) + a ribonucleoside 5'-triphosphate = RNA(n+1) + diphosphate. Functionally, DNA-dependent RNA polymerase catalyzes the transcription of DNA into RNA using the four ribonucleoside triphosphates as substrates. The sequence is that of DNA-directed RNA polymerase subunit alpha from Buchnera aphidicola subsp. Schizaphis graminum (strain Sg).